We begin with the raw amino-acid sequence, 151 residues long: IDDAAILIKINKELFQHGIFSSITVRVSEGRVLLTGTVDSPDKRLKAERVAWQQSEVKEVVNEIAVDKDEVTLKEVAIDSAISAQIKARMVAHAGIKSVNYSINTVGGVVYLMGIAQSQKELNSVIGISKRVKGVKQVISYVRLKHSKLRR.

BON domains lie at 2–68 (DDAA…AVDK) and 78–146 (IDSA…RLKH).

This is an uncharacterized protein from Anaplasma centrale.